Reading from the N-terminus, the 237-residue chain is Ribose-5-phosphate isomerase A (237 aa).

Substrate contacts are provided by residues 32 to 35 (TGRT), 85 to 88 (DGAD), and 99 to 102 (KGGG). Glu-108 acts as the Proton acceptor in catalysis. A substrate-binding site is contributed by Arg-126.

The protein belongs to the ribose 5-phosphate isomerase family. In terms of assembly, homodimer.

It catalyses the reaction aldehydo-D-ribose 5-phosphate = D-ribulose 5-phosphate. It participates in carbohydrate degradation; pentose phosphate pathway; D-ribose 5-phosphate from D-ribulose 5-phosphate (non-oxidative stage): step 1/1. Its function is as follows. Catalyzes the reversible conversion of ribose-5-phosphate to ribulose 5-phosphate. This Aeropyrum pernix (strain ATCC 700893 / DSM 11879 / JCM 9820 / NBRC 100138 / K1) protein is Ribose-5-phosphate isomerase A.